The primary structure comprises 161 residues: Lipid droplet assembly factor 1 (161 aa).

Over M1–Q43 the chain is Cytoplasmic. Residues Y44–M61 form a helical membrane-spanning segment. The Lumenal portion of the chain corresponds to S62–G67. A helical transmembrane segment spans residues F68–L87. The Cytoplasmic segment spans residues E88 to S93. The helical transmembrane segment at V94 to S110 threads the bilayer. Over L111–M116 the chain is Lumenal. A helical membrane pass occupies residues M117–S133. Residues P134 to E161 are Cytoplasmic-facing.

Belongs to the LDAF1 family. In terms of assembly, interacts with isoform 1 and isoform 3 of BSCL2/seipin to form an oligomeric complex. As to expression, expressed at high levels in the heart and skeletal muscle. Expressed at low levels in kidney, small intestine, lung and liver.

The protein localises to the endoplasmic reticulum membrane. Its subcellular location is the lipid droplet. Functionally, plays an important role in the formation of lipid droplets (LD) which are storage organelles at the center of lipid and energy homeostasis. In association with BSCL2/seipin, defines the sites of LD formation in the endoplasmic reticulum. The protein is Lipid droplet assembly factor 1 of Homo sapiens (Human).